Consider the following 203-residue polypeptide: NADH-quinone oxidoreductase subunit C (203 aa).

The protein belongs to the complex I 30 kDa subunit family. In terms of assembly, NDH-1 is composed of 14 different subunits. Subunits NuoB, C, D, E, F, and G constitute the peripheral sector of the complex.

It is found in the cell inner membrane. The enzyme catalyses a quinone + NADH + 5 H(+)(in) = a quinol + NAD(+) + 4 H(+)(out). NDH-1 shuttles electrons from NADH, via FMN and iron-sulfur (Fe-S) centers, to quinones in the respiratory chain. The immediate electron acceptor for the enzyme in this species is believed to be ubiquinone. Couples the redox reaction to proton translocation (for every two electrons transferred, four hydrogen ions are translocated across the cytoplasmic membrane), and thus conserves the redox energy in a proton gradient. This chain is NADH-quinone oxidoreductase subunit C, found in Bartonella tribocorum (strain CIP 105476 / IBS 506).